A 152-amino-acid chain; its full sequence is Aspartate carbamoyltransferase regulatory chain (152 aa).

4 residues coordinate Zn(2+): Cys108, Cys113, Cys136, and Cys139.

It belongs to the PyrI family. In terms of assembly, contains catalytic and regulatory chains. Requires Zn(2+) as cofactor.

Its function is as follows. Involved in allosteric regulation of aspartate carbamoyltransferase. The chain is Aspartate carbamoyltransferase regulatory chain from Thermococcus kodakarensis (strain ATCC BAA-918 / JCM 12380 / KOD1) (Pyrococcus kodakaraensis (strain KOD1)).